The primary structure comprises 213 residues: Outer-membrane lipoprotein carrier protein (213 aa).

The signal sequence occupies residues 1–18 (MKYFATICIAAYAGLAGA).

The protein belongs to the LolA family. As to quaternary structure, monomer.

The protein localises to the periplasm. Participates in the translocation of lipoproteins from the inner membrane to the outer membrane. Only forms a complex with a lipoprotein if the residue after the N-terminal Cys is not an aspartate (The Asp acts as a targeting signal to indicate that the lipoprotein should stay in the inner membrane). The sequence is that of Outer-membrane lipoprotein carrier protein from Albidiferax ferrireducens (strain ATCC BAA-621 / DSM 15236 / T118) (Rhodoferax ferrireducens).